Here is a 369-residue protein sequence, read N- to C-terminus: Queuine tRNA-ribosyltransferase (369 aa).

Asp89 serves as the catalytic Proton acceptor. Residues 89–93, Asp142, Gln184, and Gly211 contribute to the substrate site; that span reads DSGGF. The RNA binding stretch occupies residues 242–248; that stretch reads GGGSPEL. Residue Asp261 is the Nucleophile of the active site. The segment at 266 to 270 is RNA binding; important for wobble base 34 recognition; that stretch reads TRIAR. Positions 299, 301, 304, and 330 each coordinate Zn(2+).

It belongs to the queuine tRNA-ribosyltransferase family. Homodimer. Within each dimer, one monomer is responsible for RNA recognition and catalysis, while the other monomer binds to the replacement base PreQ1. It depends on Zn(2+) as a cofactor.

It carries out the reaction 7-aminomethyl-7-carbaguanine + guanosine(34) in tRNA = 7-aminomethyl-7-carbaguanosine(34) in tRNA + guanine. It participates in tRNA modification; tRNA-queuosine biosynthesis. Functionally, catalyzes the base-exchange of a guanine (G) residue with the queuine precursor 7-aminomethyl-7-deazaguanine (PreQ1) at position 34 (anticodon wobble position) in tRNAs with GU(N) anticodons (tRNA-Asp, -Asn, -His and -Tyr). Catalysis occurs through a double-displacement mechanism. The nucleophile active site attacks the C1' of nucleotide 34 to detach the guanine base from the RNA, forming a covalent enzyme-RNA intermediate. The proton acceptor active site deprotonates the incoming PreQ1, allowing a nucleophilic attack on the C1' of the ribose to form the product. After dissociation, two additional enzymatic reactions on the tRNA convert PreQ1 to queuine (Q), resulting in the hypermodified nucleoside queuosine (7-(((4,5-cis-dihydroxy-2-cyclopenten-1-yl)amino)methyl)-7-deazaguanosine). In Thermotoga sp. (strain RQ2), this protein is Queuine tRNA-ribosyltransferase.